Here is a 435-residue protein sequence, read N- to C-terminus: Monodehydroascorbate reductase 4, cytosolic (435 aa).

FAD is bound by residues 14–17 (GGVA), glutamate 41, arginine 48, lysine 53, isoleucine 96, and 147–148 (RD). NAD(+) contacts are provided by residues 172–178 (GGYIGLE), glutamate 196, arginine 202, and glycine 261. Residue 174–178 (YIGLE) coordinates NADP(+). Residues arginine 202 and glycine 261 each contribute to the NADP(+) site. Residue aspartate 298 participates in FAD binding. 314 to 315 (EH) contacts NAD(+). 314–315 (EH) is an NADP(+) binding site. Residue valine 316 coordinates FAD. Arginine 320 contacts L-ascorbate. Tyrosine 349 lines the FAD pocket. Tyrosine 349 contributes to the NAD(+) binding site. Tyrosine 349 contacts NADP(+). Arginine 351 is a binding site for L-ascorbate.

The protein belongs to the FAD-dependent oxidoreductase family. FAD serves as cofactor. As to expression, expressed in anthers.

Its subcellular location is the cytoplasm. The enzyme catalyses 2 monodehydro-L-ascorbate radical + NADH + H(+) = 2 L-ascorbate + NAD(+). Catalyzes the conversion of monodehydroascorbate to ascorbate, oxidizing NADH in the process. Ascorbate is a major antioxidant against reactive oxygen species (ROS) and nitric oxide (NO). In Oryza sativa subsp. japonica (Rice), this protein is Monodehydroascorbate reductase 4, cytosolic.